An 873-amino-acid chain; its full sequence is Protein SEY1 (873 aa).

Residues M1–E20 form a disordered region. The Cytoplasmic portion of the chain corresponds to M1 to Q749. Residues G49–A307 enclose the GB1/RHD3-type G domain. Position 59-66 (G59–S66) interacts with GTP. Positions S482–E506 form a coiled coil. The segment at D677 to D703 is disordered. Residues A690–D703 show a composition bias toward acidic residues. The helical transmembrane segment at V750–L770 threads the bilayer. At R771–P773 the chain is on the lumenal side. Residues V774–L794 form a helical membrane-spanning segment. The Cytoplasmic segment spans residues W795–F873. The disordered stretch occupies residues R828–F873. Residues A839–D863 are compositionally biased toward basic and acidic residues. Residues E864 to F873 show a composition bias toward acidic residues.

This sequence belongs to the TRAFAC class dynamin-like GTPase superfamily. GB1/RHD3 GTPase family. RHD3 subfamily.

Its subcellular location is the endoplasmic reticulum membrane. Cooperates with the reticulon proteins and tubule-shaping DP1 family proteins to generate and maintain the structure of the tubular endoplasmic reticulum network. Has GTPase activity, which is required for its function in ER organization. In Ajellomyces capsulatus (strain NAm1 / WU24) (Darling's disease fungus), this protein is Protein SEY1.